A 180-amino-acid chain; its full sequence is Methionine-R-sulfoxide reductase B2, mitochondrial (180 aa).

A mitochondrion-targeting transit peptide spans 1–41; that stretch reads MSRFLVRLSTVVSKGATGKSVLPQKRIFAGIRLISSSTGLQ. Residues 49–178 form the MsrB domain; that stretch reads STDWQRKLSP…NSVALNFKPR (130 aa). Residues C88, C91, C144, and C147 each coordinate Zn(2+). The active-site Nucleophile is the C167.

This sequence belongs to the MsrB Met sulfoxide reductase family. The cofactor is Zn(2+).

It is found in the mitochondrion. It carries out the reaction L-methionyl-[protein] + [thioredoxin]-disulfide + H2O = L-methionyl-(R)-S-oxide-[protein] + [thioredoxin]-dithiol. The enzyme catalyses [thioredoxin]-disulfide + L-methionine + H2O = L-methionine (R)-S-oxide + [thioredoxin]-dithiol. Functionally, methionine-sulfoxide reductase that specifically reduces methionine (R)-sulfoxide back to methionine. While in many cases, methionine oxidation is the result of random oxidation following oxidative stress, methionine oxidation is also a post-translational modification that takes place on specific residue. Upon oxidative stress, may play a role in the preservation of mitochondrial integrity by decreasing the intracellular reactive oxygen species build-up through its scavenging role, hence contributing to cell survival and protein maintenance. In Danio rerio (Zebrafish), this protein is Methionine-R-sulfoxide reductase B2, mitochondrial (msrb2).